A 356-amino-acid polypeptide reads, in one-letter code: Nicotinate-nucleotide--dimethylbenzimidazole phosphoribosyltransferase (356 aa).

Catalysis depends on Glu-317, which acts as the Proton acceptor.

It belongs to the CobT family. Homodimer.

It catalyses the reaction 5,6-dimethylbenzimidazole + nicotinate beta-D-ribonucleotide = alpha-ribazole 5'-phosphate + nicotinate + H(+). It participates in nucleoside biosynthesis; alpha-ribazole biosynthesis; alpha-ribazole from 5,6-dimethylbenzimidazole: step 1/2. In terms of biological role, catalyzes the synthesis of alpha-ribazole-5'-phosphate from nicotinate mononucleotide (NAMN) and 5,6-dimethylbenzimidazole (DMB). This is Nicotinate-nucleotide--dimethylbenzimidazole phosphoribosyltransferase from Salmonella dublin (strain CT_02021853).